A 677-amino-acid chain; its full sequence is Protein windpipe (677 aa).

An N-terminal signal peptide occupies residues 1 to 20 (MERVHLTAWLALFLIVVANA). Over 21–451 (TPTPARTPTG…IGKPKDDSSA (431 aa)) the chain is Extracellular. N-linked (GlcNAc...) asparagine glycosylation is found at N53 and N80. LRR repeat units follow at residues 91–116 (LPELTSADLSHNQLKDLGHLGKGLKR), 118–133 (NLKHNQLTSDKLRKLP), 134–156 (QHLQVLNLQHNNITHLPLELTHM), and 158–183 (QLHQLELSHNAINCSCQTLEVRNWLV). 2 N-linked (GlcNAc...) asparagine glycosylation sites follow: N145 and N170. The 33-residue stretch at 184–216 (ERIVYMEHPVVCSYPLEFRGRSWLQLKQDEICK) folds into the LRRCT domain. Disordered stretches follow at residues 264-285 (AKKVRSPQIPLPSDQVEGSGDL), 298-317 (TVAEPEAAESQLVDAAASPS), and 325-385 (KDED…TVFS). A compositionally biased stretch (basic and acidic residues) spans 347–372 (SKVKITSEDDIDSDGKPEESDVRPLE). The span at 374–385 (PENSENPDTVFS) shows a compositional bias: polar residues. Residues 452–472 (IYYLLAVIGLIVVGLVLFVAI) traverse the membrane as a helical segment. Topologically, residues 473-677 (KRCKYDSNAA…EPTHQVINGH (205 aa)) are cytoplasmic. 2 disordered regions span residues 502 to 523 (LGKPLHKNGHGNGQEHSPLIGE) and 539 to 677 (NGEA…INGH). Low complexity predominate over residues 595–607 (AQQQQLAEQNNNE).

In terms of assembly, interacts with dome; the interaction promotes internalization of dome and its subsequent lysosomal degradation. In terms of tissue distribution, in adult intestine, expressed in both small progenitor cells and large nuclei enterocytes (at protein level). During embryogenesis, restricted to the developing trachea.

It is found in the cell membrane. In terms of biological role, plays a role in negative regulation of the JAK/STAT pathway by binding to the receptor dome and promoting its internalization for subsequent lysosomal degradation, thereby reducing JAK/STAT signaling. This chain is Protein windpipe, found in Drosophila melanogaster (Fruit fly).